Consider the following 1829-residue polypeptide: Protein let-418 (1829 aa).

Composition is skewed to acidic residues over residues 1–17 (MSTEEDPSLVDAEESME) and 25–39 (ATEETEEEEEQEQGD). 2 disordered regions span residues 1–81 (MSTE…YNST) and 147–198 (MAAQ…SDQE). A compositionally biased stretch (basic residues) spans 48–63 (RSSRKKGGKGGKKGSK). 2 PHD-type zinc fingers span residues 256–303 (NDYC…CIEH) and 317–365 (DEFC…CETV). Chromo domains follow at residues 401 to 458 (LKPP…PPEF) and 489 to 550 (MQIH…NEDI). The 185-residue stretch at 614–798 (RHCWSNGTDA…FHLLNFLSKE (185 aa)) folds into the Helicase ATP-binding domain. 627–634 (DEMGLGKT) contributes to the ATP binding site. The short motif at 749–752 (DEAH) is the DEAH box element. A Helicase C-terminal domain is found at 930–1093 (LLQKMLRKLK…GKTMSKTELD (164 aa)). Disordered stretches follow at residues 1168-1198 (ASYQTKETEGQEEEEEEETEVIKEDEKEPDP), 1234-1289 (SENM…MPPL), 1415-1495 (AANG…ARPS), and 1745-1829 (NGER…PMET). The segment covering 1177–1186 (GQEEEEEEET) has biased composition (acidic residues). 2 stretches are compositionally biased toward polar residues: residues 1234–1247 (SENMGTDWSKQNQT) and 1418–1427 (GSAQGSSRST). Over residues 1429–1444 (KPKEEPKEEPMEKEDA) the composition is skewed to basic and acidic residues. Over residues 1446–1455 (ETVNGATSEP) the composition is skewed to polar residues. Residues 1474 to 1490 (DEAKEPKEEPIETEKPR) show a composition bias toward basic and acidic residues. Over residues 1749–1773 (MEEDEPVEAEEEEGVKQEPDDETQD) the composition is skewed to acidic residues. Low complexity predominate over residues 1792–1811 (DVPSTSAAAAVSSETAADAE). Positions 1819-1829 (APTDEPEPMET) are enriched in acidic residues.

In terms of assembly, component of the MEC (MEP-1-containing complex) complex that contains let-418, mep-1 and hda-1. Component of a NURD complex that contains let-418, hda-1, lin-40 and lin-53. Interacts with lin-1. Interacts with pie-1. Interacts with akir-1. As to expression, expressed in embryos and larva.

The protein resides in the nucleus. Functionally, part of a NuRD (Nucleosome Remodeling and Deacetylase) complex which is implicated in the synMuv B pathway that negatively regulates specification of vulval cell fate. This negative regulation is thought to be mediated via interaction with the promoter of lin-39, a key regulator in vulva development, and is dependent on the presence lin-1. Contributes to negative regulation of lag-2 which is expressed in the gut during larval development. Has a broad role in development. In association with akir-1, plays a role in regulating the transcription of antimicrobial peptide genes in response to fungal infection. This Caenorhabditis elegans protein is Protein let-418.